Here is a 785-residue protein sequence, read N- to C-terminus: Endonuclease MutS2 (785 aa).

Residue 335–342 (GPNTGGKT) participates in ATP binding. The Smr domain maps to 710-785 (LDLRGERYED…GNGVTIVEFK (76 aa)).

This sequence belongs to the DNA mismatch repair MutS family. MutS2 subfamily. As to quaternary structure, homodimer. Binds to stalled ribosomes, contacting rRNA.

Its function is as follows. Endonuclease that is involved in the suppression of homologous recombination and thus may have a key role in the control of bacterial genetic diversity. Acts as a ribosome collision sensor, splitting the ribosome into its 2 subunits. Detects stalled/collided 70S ribosomes which it binds and splits by an ATP-hydrolysis driven conformational change. Acts upstream of the ribosome quality control system (RQC), a ribosome-associated complex that mediates the extraction of incompletely synthesized nascent chains from stalled ribosomes and their subsequent degradation. Probably generates substrates for RQC. This chain is Endonuclease MutS2, found in Listeria monocytogenes serotype 4b (strain F2365).